Consider the following 190-residue polypeptide: MGLYQYVRALYKDPKEFLGELYKQRIQQWRREPPIVEVERPTRIDRARALGYKPLPGIKIVRVRVRKGTRKREEIKGGRRPKAEYRIRPLGVNLQWIAEERANRLHRNMEVLGSYWVGEDGLYKWYEVILVDPFNPNIYNRPEYVWLLQKNQRGRVFRGKTSSARKFRGLRNGGLGAEKVRPSKRANFKD.

This sequence belongs to the eukaryotic ribosomal protein eL15 family.

The polypeptide is Large ribosomal subunit protein eL15 (rpl15e) (Nanoarchaeum equitans (strain Kin4-M)).